We begin with the raw amino-acid sequence, 572 residues long: Proline--tRNA ligase (572 aa).

It belongs to the class-II aminoacyl-tRNA synthetase family. ProS type 1 subfamily. Homodimer.

It is found in the cytoplasm. It carries out the reaction tRNA(Pro) + L-proline + ATP = L-prolyl-tRNA(Pro) + AMP + diphosphate. Its function is as follows. Catalyzes the attachment of proline to tRNA(Pro) in a two-step reaction: proline is first activated by ATP to form Pro-AMP and then transferred to the acceptor end of tRNA(Pro). As ProRS can inadvertently accommodate and process non-cognate amino acids such as alanine and cysteine, to avoid such errors it has two additional distinct editing activities against alanine. One activity is designated as 'pretransfer' editing and involves the tRNA(Pro)-independent hydrolysis of activated Ala-AMP. The other activity is designated 'posttransfer' editing and involves deacylation of mischarged Ala-tRNA(Pro). The misacylated Cys-tRNA(Pro) is not edited by ProRS. The polypeptide is Proline--tRNA ligase (Klebsiella pneumoniae subsp. pneumoniae (strain ATCC 700721 / MGH 78578)).